The primary structure comprises 171 residues: MEKFYKVGTIVNTQGLQGEVRVMPSTDFAQERFSKGSVLALFDDKDNYIQDLKVKSGRPQKNFYVVKFEGFYHINDVEKYKGYIVKIAEENQEDLDDGEFYYHEIIGSDVYENDILIGQISEILQPGANDVWVVKRKGKRDLLLPYIPPVILNVDVNQHRVDVSIMEGLDD.

The PRC barrel domain maps to Asp-97–Leu-169.

This sequence belongs to the RimM family. Binds ribosomal protein uS19.

Its subcellular location is the cytoplasm. An accessory protein needed during the final step in the assembly of 30S ribosomal subunit, possibly for assembly of the head region. Essential for efficient processing of 16S rRNA. May be needed both before and after RbfA during the maturation of 16S rRNA. It has affinity for free ribosomal 30S subunits but not for 70S ribosomes. This chain is Ribosome maturation factor RimM, found in Lactococcus lactis subsp. lactis (strain IL1403) (Streptococcus lactis).